We begin with the raw amino-acid sequence, 230 residues long: Small ribosomal subunit protein uS7B (230 aa).

The interval 1–22 (MSEEVVESSSQEASQVIPQEQE) is disordered. A compositionally biased stretch (low complexity) spans 7 to 16 (ESSSQEASQV).

Belongs to the universal ribosomal protein uS7 family.

The protein is Small ribosomal subunit protein uS7B (RpS5b) of Drosophila melanogaster (Fruit fly).